A 142-amino-acid polypeptide reads, in one-letter code: Movement protein (142 aa).

The disordered stretch occupies residues 1–142 (MDLPEDQARF…LDRSESLSRY (142 aa)). Composition is skewed to polar residues over residues 9–22 (RFTNSYSLRTTSME) and 33–43 (LYQSASRSQMA). Residues 50 to 62 (SIISRTSSWRTSP) are compositionally biased toward low complexity. Polar residues-rich tracts occupy residues 74–95 (MNSILTSRTQQSSPKLTNSASP) and 113–124 (TTLQRTNSGFST). The span at 125–142 (KETEMPRLLDRSESLSRY) shows a compositional bias: basic and acidic residues.

Belongs to the luteoviruses movement protein family.

Functionally, transports viral genome to neighboring plant cells directly through plasmosdesmata, without any budding. The movement protein allows efficient cell to cell propagation, by bypassing the host cell wall barrier. In Cicer arietinum (Chickpea), this protein is Movement protein.